A 275-amino-acid polypeptide reads, in one-letter code: Large ribosomal subunit protein uL2 (275 aa).

The disordered stretch occupies residues 214 to 275 (RWRGNRPTVR…NKFILSHRNK (62 aa)). A compositionally biased stretch (basic residues) spans 255–275 (KGKKTRSNKRTNKFILSHRNK).

This sequence belongs to the universal ribosomal protein uL2 family. As to quaternary structure, part of the 50S ribosomal subunit. Forms a bridge to the 30S subunit in the 70S ribosome.

In terms of biological role, one of the primary rRNA binding proteins. Required for association of the 30S and 50S subunits to form the 70S ribosome, for tRNA binding and peptide bond formation. It has been suggested to have peptidyltransferase activity; this is somewhat controversial. Makes several contacts with the 16S rRNA in the 70S ribosome. The sequence is that of Large ribosomal subunit protein uL2 from Blochmanniella pennsylvanica (strain BPEN).